Here is a 440-residue protein sequence, read N- to C-terminus: Histidinol dehydrogenase (440 aa).

Tyr134, Gln196, and Asn219 together coordinate NAD(+). Substrate is bound by residues Ser242, Gln264, and His267. Zn(2+)-binding residues include Gln264 and His267. Residues Glu332 and His333 each act as proton acceptor in the active site. 4 residues coordinate substrate: His333, Asp366, Glu420, and His425. Residue Asp366 coordinates Zn(2+). His425 is a Zn(2+) binding site.

It belongs to the histidinol dehydrogenase family. It depends on Zn(2+) as a cofactor.

It carries out the reaction L-histidinol + 2 NAD(+) + H2O = L-histidine + 2 NADH + 3 H(+). It participates in amino-acid biosynthesis; L-histidine biosynthesis; L-histidine from 5-phospho-alpha-D-ribose 1-diphosphate: step 9/9. Functionally, catalyzes the sequential NAD-dependent oxidations of L-histidinol to L-histidinaldehyde and then to L-histidine. The polypeptide is Histidinol dehydrogenase (Prochlorococcus marinus (strain SARG / CCMP1375 / SS120)).